The primary structure comprises 701 residues: C6 finger domain transcription factor nscR (701 aa).

Residues cysteine 17–cysteine 43 constitute a DNA-binding region (zn(2)-C6 fungal-type).

It is found in the nucleus. Its function is as follows. Transcription factor that specifically regulates the neosartoricin B biosynthesis gene cluster. The protein is C6 finger domain transcription factor nscR of Arthroderma benhamiae (strain ATCC MYA-4681 / CBS 112371) (Trichophyton mentagrophytes).